The following is a 152-amino-acid chain: Large ribosomal subunit protein uL15 (152 aa).

The interval M1–M57 is disordered. The segment covering S14–R23 has biased composition (basic residues). Positions I25 to M37 are enriched in gly residues.

The protein belongs to the universal ribosomal protein uL15 family. Part of the 50S ribosomal subunit.

In terms of biological role, binds to the 23S rRNA. The polypeptide is Large ribosomal subunit protein uL15 (Prochlorococcus marinus (strain MIT 9312)).